We begin with the raw amino-acid sequence, 449 residues long: Adenylosuccinate synthetase (449 aa).

GTP is bound by residues 12-18 and 40-42; these read GDEGKGK and GHT. Catalysis depends on Asp-13, which acts as the Proton acceptor. Mg(2+) contacts are provided by Asp-13 and Gly-40. IMP contacts are provided by residues 13 to 16, 38 to 41, Thr-128, Arg-142, Gln-223, Thr-238, and Arg-302; these read DEGK and NAGH. His-41 (proton donor) is an active-site residue. 298 to 304 contacts substrate; the sequence is TTTGRQR. GTP is bound by residues Arg-304, 330–332, and 412–414; these read KLD and SLG.

The protein belongs to the adenylosuccinate synthetase family. In terms of assembly, homodimer. Mg(2+) serves as cofactor.

It localises to the cytoplasm. It carries out the reaction IMP + L-aspartate + GTP = N(6)-(1,2-dicarboxyethyl)-AMP + GDP + phosphate + 2 H(+). It participates in purine metabolism; AMP biosynthesis via de novo pathway; AMP from IMP: step 1/2. Functionally, plays an important role in the de novo pathway of purine nucleotide biosynthesis. Catalyzes the first committed step in the biosynthesis of AMP from IMP. This is Adenylosuccinate synthetase from Synechococcus sp. (strain JA-2-3B'a(2-13)) (Cyanobacteria bacterium Yellowstone B-Prime).